An 89-amino-acid chain; its full sequence is DNA/RNA-binding protein Alba (89 aa).

K11 carries the N6-acetyllysine modification.

Belongs to the histone-like Alba family. In terms of processing, acetylated. Acetylation at Lys-11 decreases DNA-binding affinity.

It is found in the cytoplasm. The protein resides in the chromosome. Functionally, binds double-stranded DNA tightly but without sequence specificity. Involved in DNA compaction. This chain is DNA/RNA-binding protein Alba, found in Thermoplasma acidophilum (strain ATCC 25905 / DSM 1728 / JCM 9062 / NBRC 15155 / AMRC-C165).